The sequence spans 580 residues: Multidrug resistance-like ATP-binding protein MdlB (580 aa).

One can recognise an ABC transmembrane type-1 domain in the interval Leu25 to Gln310. The next 6 helical transmembrane spans lie at Ile26–Ile46, Leu61–Leu81, Ile150–Val170, Phe173–Leu193, Leu247–Phe267, and Met268–Ile288. Residues Ile341 to Phe575 enclose the ABC transporter domain. Gly375–Ser382 is an ATP binding site.

Belongs to the ABC transporter superfamily. Drug exporter-2 (TC 3.A.1.117) family.

The protein localises to the cell membrane. The enzyme catalyses ATP + H2O + xenobioticSide 1 = ADP + phosphate + xenobioticSide 2.. This chain is Multidrug resistance-like ATP-binding protein MdlB (mdlB), found in Buchnera aphidicola subsp. Acyrthosiphon pisum (strain APS) (Acyrthosiphon pisum symbiotic bacterium).